A 406-amino-acid polypeptide reads, in one-letter code: Zinc finger protein 57 (406 aa).

The KRAB domain maps to V17 to P88. The disordered stretch occupies residues E57 to S77. A C2H2-type 1; degenerate zinc finger spans residues F90 to R113. 2 consecutive C2H2-type zinc fingers follow at residues F140 to H162 and R168 to H190. The interval K194–S226 is disordered. Residues V270–H292 form a C2H2-type 4 zinc finger. The C2H2-type 5; degenerate zinc-finger motif lies at Y318–L337. Positions S372–S406 are disordered. Positions E395–S406 are enriched in acidic residues.

This sequence belongs to the krueppel C2H2-type zinc-finger protein family. As to expression, expressed in oligodendrocytes and at lower levels in astrocytes.

It is found in the nucleus. In terms of biological role, transcription regulator required to maintain maternal and paternal gene imprinting, a process by which gene expression is restricted in a parent of origin-specific manner by epigenetic modification of genomic DNA and chromatin, including DNA methylation. Acts by controlling DNA methylation during the earliest multicellular stages of development at multiple imprinting control regions (ICRs). Acts together with ZNF445. Required for the establishment of maternal methylation imprints at SNRPN locus. Acts as a transcriptional repressor in Schwann cells. Binds to a 5'-TGCCGC-3' consensus sequence and recognizes the methylated CpG within this element. In Rattus norvegicus (Rat), this protein is Zinc finger protein 57 (Zfp57).